The sequence spans 518 residues: E3 ubiquitin-protein ligase TRIM39 (518 aa).

The RING-type zinc finger occupies 29-70 (CSVCLEYLKEPVIIECGHNFCKACITRWWEDLERDFPCPVCR). Residues 102 to 143 (RDESLCPQHHEALSLFCYEDQEAVCLICAISHTHRAHTVVPL) form a B box-type zinc finger. Zn(2+) is bound by residues Cys107, His110, Cys129, and His135. Residues 181-250 (ELKRLVESRR…AHLAAEVEGK (70 aa)) adopt a coiled-coil conformation. 2 interaction with CDKN1A regions span residues 268-337 (KNIP…QLIA) and 389-518 (TSGR…TDWE). A B30.2/SPRY domain is found at 319–514 (SNFPRQYFAL…NAAPLTIRPP (196 aa)).

The protein belongs to the TRIM/RBCC family. In terms of assembly, isoform 1 interacts with MOAP1. Isoform 1 and isoform 2 interact with CDKN1A. Isoform 2 interacts (via domain B box-type) with CACTIN. Post-translationally, autoubiquitinated. Ubiquitous; highly expressed in brain, heart, kidney, liver, skeletal muscle, spleen and testis.

The protein resides in the cytoplasm. It localises to the cytosol. The protein localises to the mitochondrion. It is found in the nucleus. The enzyme catalyses S-ubiquitinyl-[E2 ubiquitin-conjugating enzyme]-L-cysteine + [acceptor protein]-L-lysine = [E2 ubiquitin-conjugating enzyme]-L-cysteine + N(6)-ubiquitinyl-[acceptor protein]-L-lysine.. The protein operates within protein modification; protein ubiquitination. In terms of biological role, E3 ubiquitin-protein ligase. May facilitate apoptosis by inhibiting APC/C-Cdh1-mediated poly-ubiquitination and subsequent proteasome-mediated degradation of the pro-apoptotic protein MOAP1. Regulates the G1/S transition of the cell cycle and DNA damage-induced G2 arrest by stabilizing CDKN1A/p21. Positively regulates CDKN1A/p21 stability by competing with DTL for CDKN1A/p21 binding, therefore disrupting DCX(DTL) E3 ubiquitin ligase complex-mediated CDKN1A/p21 ubiquitination and degradation. Regulates the G1/S transition of the cell cycle and DNA damage-induced G2 arrest by stabilizing CDKN1A/p21. Positively regulates CDKN1A/p21 stability by competing with DTL for CDKN1A/p21 binding, therefore disrupting DCX(DTL) E3 ubiquitin ligase complex-mediated CDKN1A/p21 ubiquitination and degradation. Negatively regulates the canonical NF-kappa-B signaling pathway via stabilization of CACTIN in an ubiquitination-independent manner. In Homo sapiens (Human), this protein is E3 ubiquitin-protein ligase TRIM39 (TRIM39).